The following is a 1051-amino-acid chain: Anucleate primary sterigmata protein B (1051 aa).

2 coiled-coil regions span residues 10-200 (IDRL…YAIA) and 239-285 (STLV…ELKL). Positions 58-90 (KDNQGLKRKIRDLEKQLKDQQSDKESMLNHDPE) are enriched in basic and acidic residues. Disordered stretches follow at residues 58–100 (KDNQ…DRDH) and 141–160 (LKSLNDGRPTGSDSGAREER). The segment covering 294 to 303 (AGDSILDRSA) has biased composition (basic and acidic residues). 4 disordered regions span residues 294–329 (AGDSILDRSASRAQGRPSSSISDRTGQSPIDDAERE), 877–902 (NHPRSRSTTAGVAGSPQSSTIDLAER), 909–928 (NTAAESPARSSIPQPAQMTN), and 984–1051 (EERD…DIEV). Residues 309–321 (RPSSSISDRTGQS) are compositionally biased toward polar residues. Coiled coils occupy residues 325–743 (DAER…RNSM) and 787–878 (RNLL…LQNH). Polar residues-rich tracts occupy residues 877 to 897 (NHPRSRSTTAGVAGSPQSSTI) and 916 to 928 (ARSSIPQPAQMTN). Positions 950–1004 (NQEVWIKRLHELERRLKAEREARLLDRNGARRRLEERDAENKRLRAQLDRQRLRQ) form a coiled coil. Composition is skewed to basic and acidic residues over residues 984–1001 (EERDAENKRLRAQLDRQR) and 1028–1040 (EGYREREEEHSSS).

It is found in the cytoplasm. Functionally, involved in regulation of nuclear migration. May be involved in regulating nuclear positioning. This chain is Anucleate primary sterigmata protein B (apsB), found in Emericella nidulans (strain FGSC A4 / ATCC 38163 / CBS 112.46 / NRRL 194 / M139) (Aspergillus nidulans).